A 602-amino-acid chain; its full sequence is Myotubularin (602 aa).

Polar residues predominate over residues 1-16 (MATSSTPKYNSNSLEN). Residues 1–33 (MATSSTPKYNSNSLENSVRRSPGDGINHEQNDE) form a disordered region. A compositionally biased stretch (basic and acidic residues) spans 17–33 (SVRRSPGDGINHEQNDE). The GRAM domain occupies 28 to 96 (HEQNDEISRL…GVIARIEKMG (69 aa)). One can recognise a Myotubularin phosphatase domain in the interval 162–537 (GWAVYDAMTE…RHLELWVNYY (376 aa)). A 1,2-diacyl-sn-glycero-3-phospho-(1D-myo-inositol-3,5-bisphosphate) is bound by residues asparagine 287, asparagine 312, and isoleucine 313. A 1,2-diacyl-sn-glycero-3-phospho-(1D-myo-inositol-3-phosphate)-binding residues include asparagine 287, asparagine 312, and isoleucine 313. Cysteine 374 (phosphocysteine intermediate) is an active-site residue. The a 1,2-diacyl-sn-glycero-3-phospho-(1D-myo-inositol-3,5-bisphosphate) site is built by serine 375, aspartate 376, glycine 377, tryptophan 378, aspartate 379, arginine 380, lysine 416, and arginine 420. A 1,2-diacyl-sn-glycero-3-phospho-(1D-myo-inositol-3-phosphate) contacts are provided by serine 375, aspartate 376, glycine 377, tryptophan 378, aspartate 379, and arginine 380. Arginine 420 contributes to the a 1,2-diacyl-sn-glycero-3-phospho-(1D-myo-inositol-3-phosphate) binding site. The segment at 577–602 (NSPKINRSTTSPSSPSQMMPQVQTPF) is disordered. Low complexity predominate over residues 584–602 (STTSPSSPSQMMPQVQTPF).

The protein belongs to the protein-tyrosine phosphatase family. Non-receptor class myotubularin subfamily.

The protein localises to the cytoplasm. The protein resides in the cell membrane. Its subcellular location is the cell projection. It is found in the filopodium. It localises to the ruffle. The protein localises to the late endosome. The protein resides in the myofibril. Its subcellular location is the sarcomere. It catalyses the reaction a 1,2-diacyl-sn-glycero-3-phospho-(1D-myo-inositol-3-phosphate) + H2O = a 1,2-diacyl-sn-glycero-3-phospho-(1D-myo-inositol) + phosphate. It carries out the reaction a 1,2-diacyl-sn-glycero-3-phospho-(1D-myo-inositol-3,5-bisphosphate) + H2O = a 1,2-diacyl-sn-glycero-3-phospho-(1D-myo-inositol-5-phosphate) + phosphate. The enzyme catalyses 1,2-dioctanoyl-sn-glycero-3-phospho-(1-D-myo-inositol-3-phosphate) + H2O = 1,2-dioctanoyl-sn-glycero-3-phospho-(1D-myo-inositol) + phosphate. The catalysed reaction is 1,2-dioctanoyl-sn-glycero-3-phospho-(1D-myo-inositol-3,5-bisphosphate) + H2O = 1,2-dioctanoyl-sn-glycero-3-phospho-(1D-myo-inositol-5-phosphate) + phosphate. It catalyses the reaction 1,2-dihexadecanoyl-sn-glycero-3-phospho-(1D-myo-inositol-3,5-phosphate) + H2O = 1,2-dihexadecanoyl-sn-glycero-3-phospho-(1D-myo-inositol-5-phosphate) + phosphate. Its function is as follows. Lipid phosphatase which dephosphorylates phosphatidylinositol 3-monophosphate (PI3P) and phosphatidylinositol 3,5-bisphosphate (PI(3,5)P2). In Xenopus laevis (African clawed frog), this protein is Myotubularin (mtm1).